Reading from the N-terminus, the 290-residue chain is Type II secretion system protein C (290 aa).

The Cytoplasmic portion of the chain corresponds to 1–28; that stretch reads MTLPFRDDLLSSLLARCKTVPLSRFSQP. Residues 29 to 46 form a helical membrane-spanning segment; sequence LFWLLLLLLAHQCAGLTW. At 47 to 290 the chain is on the periplasmic side; that stretch reads RLLDLGSQQS…LYDVYVGLSE (244 aa).

Belongs to the GSP C family.

It is found in the cell inner membrane. In terms of biological role, involved in a type II secretion system (T2SS, formerly general secretion pathway, GSP) for the export of proteins. The chain is Type II secretion system protein C (exeC) from Aeromonas salmonicida.